The primary structure comprises 647 residues: MHSIEHIVARHFNYALEKTKDLPKSINNEITNEIIILKDYQYLVSRIFIGLSELNSLLLFWDTGYGKTLTSVYIMKHLKLVFPQWFFVIFIKKSLYVDPWLNTLSKLGMKGQNIKFVLYDSSSSLKQFNVLYRTIISSINTKNRILIIIDEVHQVISRTIEKSSSTQRNFLSIFNKIVKLANSENNKLLCMSATPITNNVLEFKYLINLLRPKIIEFKEDFIVNNTLKNHEQLKNGLISITSYQKISEADSFTNTSYTEGFASKNIFYHNVTMTPEQSNIFNIADKHDKKSALGGLKTMRRLVSSFAFYDIKIKGSMSQIEYNKMVSEKLNEFKSIIGNFKFSNEFIDIFRNNDSFSNAKSSEIEIFDKIKQYSCKYIEACKIILNSNGKVLLYEPLVSFEGISTLKIYFNIFNISYVEYSSKTESTRDYNIDIFNKYDNLYGNKIKVCIFSAAGSEGISFSSINDIIILDLPWKESDIKQIIGRSIRLNSHEELPIEKRYVNVHFIIASTIDGKSVDKEIFDLIKSKQDKINVLNSFMKVISIEQIHSKYKYAEPVENEYIFNNIRHTKIDDVNENNVITKIIVSPIYYCSEDNLNIIYNGYLDKKTGIIYSNNIPIAKLILDENNIYKFFIKDDKLVYITKSIYE.

The 166-residue stretch at 48-213 folds into the Helicase ATP-binding domain; that stretch reads FIGLSELNSL…KYLINLLRPK (166 aa). 61 to 68 provides a ligand contact to ATP; it reads WDTGYGKT. Residues 150–153 carry the DEXH box motif; sequence DEVH. A Helicase C-terminal domain is found at 377–540; the sequence is YIEACKIILN…KINVLNSFMK (164 aa). The tract at residues 466–532 is binding to the cap-specific mRNA (nucleoside-2'-O-)-methyltransferase; sequence DIIILDLPWK…DLIKSKQDKI (67 aa).

The protein belongs to the helicase family. NPH I subfamily. Monomer. Interacts (via C-terminus) with RAP94 (via N-terminus). Interacts with the cap-specific mRNA (nucleoside-2'-O-)-methyltransferase.

It localises to the virion. The catalysed reaction is a ribonucleoside 5'-triphosphate + H2O = a ribonucleoside 5'-diphosphate + phosphate + H(+). Functionally, DNA-dependent ATPase required for providing the needed energy to achieve the termination of early transcripts. Acts in concert with the RAP94 subunit of the virion RNA polymerase and the capping enzyme/VTF to catalyze release of UUUUUNU-containing nascent RNA from the elongation complex. NPH-I must bind ssDNA in order to exhibit ATPase activity. The sequence is that of Nucleoside triphosphatase I (NPH1) from Melanoplus sanguinipes entomopoxvirus (MsEPV).